The sequence spans 89 residues: Small ribosomal subunit protein bS20 (89 aa).

Positions 1-11 (MANHKSAEKRN) are enriched in basic and acidic residues. A disordered region spans residues 1–30 (MANHKSAEKRNRQNQVARLRNKSTRTAMKN).

The protein belongs to the bacterial ribosomal protein bS20 family.

Its function is as follows. Binds directly to 16S ribosomal RNA. The sequence is that of Small ribosomal subunit protein bS20 from Desulfotalea psychrophila (strain LSv54 / DSM 12343).